Reading from the N-terminus, the 288-residue chain is 3'-5' exonuclease (288 aa).

Residues 30–67 form a disordered region; it reads RSSSSSSSAAPTVQATTSVHGHEEDPNQIPNNIRRQLP. Polar residues-rich tracts occupy residues 38 to 48 and 57 to 67; these read AAPTVQATTSV and QIPNNIRRQLP. Residues 129–279 enclose the 3'-5' exonuclease domain; the sequence is FVGLDIEWRP…ASWHLYKVLK (151 aa).

Interacts with KU70 and KU80. Interacts with RECQL2. The cofactor is Mg(2+). Mn(2+) serves as cofactor. Expressed ubiquitously.

The protein resides in the nucleus. Activated upon interaction with the KU heterodimer. Not stimulated by ATP. Functionally, exonuclease that digests recessed strands of DNA duplexes in the 3' to 5' direction but hardly single-stranded DNA or blunt-ended duplexes. Also able to digest 3'-protruding strands and 3'-recessed strand termini of duplexes containing mismatched bases. The chain is 3'-5' exonuclease (WEX) from Arabidopsis thaliana (Mouse-ear cress).